Reading from the N-terminus, the 346-residue chain is Histidinol-phosphate aminotransferase (346 aa).

Lys209 carries the N6-(pyridoxal phosphate)lysine modification.

The protein belongs to the class-II pyridoxal-phosphate-dependent aminotransferase family. Histidinol-phosphate aminotransferase subfamily. In terms of assembly, homodimer. Pyridoxal 5'-phosphate serves as cofactor.

It carries out the reaction L-histidinol phosphate + 2-oxoglutarate = 3-(imidazol-4-yl)-2-oxopropyl phosphate + L-glutamate. The protein operates within amino-acid biosynthesis; L-histidine biosynthesis; L-histidine from 5-phospho-alpha-D-ribose 1-diphosphate: step 7/9. The protein is Histidinol-phosphate aminotransferase of Flavobacterium psychrophilum (strain ATCC 49511 / DSM 21280 / CIP 103535 / JIP02/86).